A 315-amino-acid polypeptide reads, in one-letter code: tRNA U34 carboxymethyltransferase (315 aa).

Carboxy-S-adenosyl-L-methionine-binding positions include K79, W93, K98, G117, 142-144, 169-170, Y193, and R307; these read DPS and VE.

It belongs to the class I-like SAM-binding methyltransferase superfamily. CmoB family. As to quaternary structure, homotetramer.

The enzyme catalyses carboxy-S-adenosyl-L-methionine + 5-hydroxyuridine(34) in tRNA = 5-carboxymethoxyuridine(34) in tRNA + S-adenosyl-L-homocysteine + H(+). Catalyzes carboxymethyl transfer from carboxy-S-adenosyl-L-methionine (Cx-SAM) to 5-hydroxyuridine (ho5U) to form 5-carboxymethoxyuridine (cmo5U) at position 34 in tRNAs. The chain is tRNA U34 carboxymethyltransferase from Helicobacter hepaticus (strain ATCC 51449 / 3B1).